A 928-amino-acid chain; its full sequence is DENN domain-containing protein 2C (928 aa).

2 disordered regions span residues 67 to 105 and 245 to 266; these read KSKNLDVTSRENVGLDINENTKSHDQSENENKKHEYDDT and QSSLASSQEPEPKKYGGKIRGR. Residues 85–105 are compositionally biased toward basic and acidic residues; sequence ENTKSHDQSENENKKHEYDDT. Position 271 is a phosphoserine (Ser-271). The tract at residues 428–456 is disordered; that stretch reads KLHSYTGKELPPTKGETSGNESDAEYLPK. In terms of domain architecture, uDENN spans 492–641; sequence ELFVVVSLQK…PFPAPGRTIT (150 aa). Residues 663 to 796 enclose the cDENN domain; sequence RLEHVDFKCL…LQAALMQILE (134 aa). Residues 798 to 888 form the dDENN domain; that stretch reads RNEILTQEQN…QDRELRKSGV (91 aa).

In terms of biological role, guanine nucleotide exchange factor (GEF) which may activate RAB9A and RAB9B. Promotes the exchange of GDP to GTP, converting inactive GDP-bound Rab proteins into their active GTP-bound form. This chain is DENN domain-containing protein 2C (DENND2C), found in Homo sapiens (Human).